The following is a 423-amino-acid chain: G-protein coupled receptor 83 (423 aa).

The N-terminal stretch at 1–17 (MKVPPVLLLFLLSSVRA) is a signal peptide. The Extracellular portion of the chain corresponds to 18–71 (TEQPQVVTEHPSMEAALTGPNASSHFWANYTFSDWQNFVGRRRYGAESQNPTVK). Residues asparagine 38 and asparagine 46 are each glycosylated (N-linked (GlcNAc...) asparagine). The chain crosses the membrane as a helical span at residues 72-92 (ALLIVAYSFTIVFSLFGNVLV). The Cytoplasmic segment spans residues 93-107 (CHVIFKNQRMHSATS). The helical transmembrane segment at 108–129 (LFIVNLAVADIMITLLNTPFTL) threads the bilayer. The Extracellular segment spans residues 130–145 (VRFVNSTWVFGKGMCH). An N-linked (GlcNAc...) asparagine glycan is attached at asparagine 134. A disulfide bridge connects residues cysteine 144 and cysteine 224. A helical transmembrane segment spans residues 146–167 (VSRFAQYCSLHVSALTLTAIAV). Over 168 to 186 (DRHQVIMHPLKPRISITKG) the chain is Cytoplasmic. A helical transmembrane segment spans residues 187-208 (VIYIAVIWVMATFFSLPHAICQ). Residues 209 to 238 (KLFTFKYSEDIVRSLCLPDFPEPADLFWKY) are Extracellular-facing. A helical membrane pass occupies residues 239–260 (LDLATFILLYLLPLFIISVAYA). Residues 261 to 293 (RVAKKLWLCNTIGDVTTEQYLALRRKKKTTVKM) are Cytoplasmic-facing. A helical membrane pass occupies residues 294–315 (LVLVVVLFALCWFPLNCYVLLL). The Extracellular segment spans residues 316-327 (SSKAIHTNNALY). Residues 328–348 (FAFHWFAMSSTCYNPFIYCWL) form a helical membrane-spanning segment. The Cytoplasmic portion of the chain corresponds to 349 to 423 (NENFRVELKA…SSVEPVVAMS (75 aa)). The segment at 389–423 (SHGRRAPLPNHHLPSSQIQSGKTDLSSVEPVVAMS) is disordered. Residues 401–414 (LPSSQIQSGKTDLS) are compositionally biased toward polar residues.

Belongs to the G-protein coupled receptor 1 family. Predominantly expressed in the brain, with moderate expression in the hypothalamus. Expressed in the thymus.

Its subcellular location is the cell membrane. G-protein coupled receptor for PEN, a neuropeptide produced from the precursor protein, proSAAS (encoded by PCSK1N). Acts through a G(i)- and G(q)-alpha-alpha-mediated pathway in response to PEN. Plays a role in food intake and body weight regulation. May contribute to the regulation of anxiety-related behaviors. This is G-protein coupled receptor 83 from Mus musculus (Mouse).